A 35-amino-acid polypeptide reads, in one-letter code: Dolichyl-diphosphooligosaccharide--protein glycosyltransferase subunit 4B (35 aa).

At 1–8 (MFDDQDLG) the chain is on the lumenal side. A helical membrane pass occupies residues 9–29 (FFANFLGIFIFIMVIAYHFVV). Residues 30-35 (AEPKFE) are Cytoplasmic-facing.

Belongs to the OST4 family. In terms of assembly, component of the oligosaccharyltransferase (OST) complex.

The protein resides in the endoplasmic reticulum membrane. Subunit of the oligosaccharyl transferase (OST) complex that catalyzes the initial transfer of a defined glycan (Glc(3)Man(9)GlcNAc(2) in eukaryotes) from the lipid carrier dolichol-pyrophosphate to an asparagine residue within an Asn-X-Ser/Thr consensus motif in nascent polypeptide chains, the first step in protein N-glycosylation. N-glycosylation occurs cotranslationally and the complex associates with the Sec61 complex at the channel-forming translocon complex that mediates protein translocation across the endoplasmic reticulum (ER). All subunits are required for a maximal enzyme activity. The sequence is that of Dolichyl-diphosphooligosaccharide--protein glycosyltransferase subunit 4B (OST4B) from Arabidopsis thaliana (Mouse-ear cress).